Here is a 65-residue protein sequence, read N- to C-terminus: Large ribosomal subunit protein uL29 (65 aa).

Belongs to the universal ribosomal protein uL29 family.

The protein is Large ribosomal subunit protein uL29 (rpmC) of Buchnera aphidicola subsp. Acyrthosiphon pisum (strain APS) (Acyrthosiphon pisum symbiotic bacterium).